A 211-amino-acid chain; its full sequence is Thymidylate kinase (211 aa).

An ATP-binding site is contributed by 11 to 18 (GPDGAGKT).

The protein belongs to the thymidylate kinase family.

The catalysed reaction is dTMP + ATP = dTDP + ADP. Its function is as follows. Phosphorylation of dTMP to form dTDP in both de novo and salvage pathways of dTTP synthesis. The polypeptide is Thymidylate kinase (Streptococcus pyogenes serotype M3 (strain ATCC BAA-595 / MGAS315)).